Consider the following 259-residue polypeptide: Deoxyribose-phosphate aldolase (259 aa).

Aspartate 101 acts as the Proton donor/acceptor in catalysis. The active-site Schiff-base intermediate with acetaldehyde is the lysine 166. The Proton donor/acceptor role is filled by lysine 200.

This sequence belongs to the DeoC/FbaB aldolase family. DeoC type 2 subfamily.

It is found in the cytoplasm. The catalysed reaction is 2-deoxy-D-ribose 5-phosphate = D-glyceraldehyde 3-phosphate + acetaldehyde. It functions in the pathway carbohydrate degradation; 2-deoxy-D-ribose 1-phosphate degradation; D-glyceraldehyde 3-phosphate and acetaldehyde from 2-deoxy-alpha-D-ribose 1-phosphate: step 2/2. Its function is as follows. Catalyzes a reversible aldol reaction between acetaldehyde and D-glyceraldehyde 3-phosphate to generate 2-deoxy-D-ribose 5-phosphate. This chain is Deoxyribose-phosphate aldolase, found in Glaesserella parasuis serovar 5 (strain SH0165) (Haemophilus parasuis).